A 303-amino-acid polypeptide reads, in one-letter code: Glutamyl-Q tRNA(Asp) synthetase (303 aa).

Residues 16–20 and E52 each bind L-glutamate; that span reads RFAPS. Positions 19–29 match the 'HIGH' region motif; the sequence is PSPSGPLHFGS. Zn(2+) is bound by residues C108, C110, Y122, and C126. Y177 and R195 together coordinate L-glutamate. Residues 233–237 carry the 'KMSKS' region motif; it reads KLSKQ. K236 is an ATP binding site.

Belongs to the class-I aminoacyl-tRNA synthetase family. GluQ subfamily. The cofactor is Zn(2+).

Its function is as follows. Catalyzes the tRNA-independent activation of glutamate in presence of ATP and the subsequent transfer of glutamate onto a tRNA(Asp). Glutamate is transferred on the 2-amino-5-(4,5-dihydroxy-2-cyclopenten-1-yl) moiety of the queuosine in the wobble position of the QUC anticodon. The chain is Glutamyl-Q tRNA(Asp) synthetase from Vibrio vulnificus (strain YJ016).